The primary structure comprises 487 residues: Glutamate--tRNA ligase (487 aa).

The 'HIGH' region signature appears at 11 to 21 (PSPTGYPHLGN). 4 residues coordinate Zn(2+): C108, C110, C135, and D137. Positions 245–249 (KLSKR) match the 'KMSKS' region motif. Position 248 (K248) interacts with ATP.

The protein belongs to the class-I aminoacyl-tRNA synthetase family. Glutamate--tRNA ligase type 1 subfamily. As to quaternary structure, monomer. Zn(2+) is required as a cofactor.

The protein resides in the cytoplasm. The catalysed reaction is tRNA(Glu) + L-glutamate + ATP = L-glutamyl-tRNA(Glu) + AMP + diphosphate. In terms of biological role, catalyzes the attachment of glutamate to tRNA(Glu) in a two-step reaction: glutamate is first activated by ATP to form Glu-AMP and then transferred to the acceptor end of tRNA(Glu). This chain is Glutamate--tRNA ligase, found in Dehalococcoides mccartyi (strain ATCC BAA-2100 / JCM 16839 / KCTC 5957 / BAV1).